A 136-amino-acid polypeptide reads, in one-letter code: Ribonuclease YqgF (136 aa).

Belongs to the YqgF nuclease family. In terms of assembly, monomer; also forms low amounts of dimers. Mn(2+) is required as a cofactor.

The protein resides in the cytoplasm. Functionally, has robust sequence-specific RNase activity, acting as a 5'-3' exo/endonuclease on ssRNA substrates with minimally 3 consecutive adenine bases. Has no detectable nuclease activity on dsRNA, dsDNA or Holliday junction DNA. This is Ribonuclease YqgF from Deinococcus radiodurans (strain ATCC 13939 / DSM 20539 / JCM 16871 / CCUG 27074 / LMG 4051 / NBRC 15346 / NCIMB 9279 / VKM B-1422 / R1).